Reading from the N-terminus, the 152-residue chain is Protein FYV5 (152 aa).

5 consecutive transmembrane segments (helical) span residues 26-46, 56-76, 82-102, 106-126, and 127-147; these read IISICFSMLSFVFDFSVRICS, LISSSAFKVVSAFSLAGSCVL, VGIIVSLLLFNFSTCNFVLFL, LIDLFFCTFLPTPTFLPTPFF, and FMLHLPIFSLLNALELLYLII.

Its subcellular location is the cell membrane. It localises to the secreted. It is found in the cell wall. In terms of biological role, involved in maintaining an adequate ionic strength homeostasis of the cellular aqueous environment, necessary for normal growth rate. Required for survival upon exposure to K1 killer toxin and hence plays a role in cell wall glucan synthesis. Required for dithiothreitol (DTT) resistance. Involved in cell cycle progression. The protein is Protein FYV5 (FYV5) of Saccharomyces cerevisiae (strain ATCC 204508 / S288c) (Baker's yeast).